A 1117-amino-acid chain; its full sequence is MPFITSRPVAKNSSHSLSETDLNQSKGQPFQPSPTKKLGSMQQRRRSSTIRHALSSLLGGANVHSPAVLNNTTKGGNNNGNIRSSNTDAQLLGKKQNKQPPPNARRHSTTAIQGSISDSATTTPRSSTSDTNRRTSGRLSVDQEPRISGGRYSQIEEDSTVLDFDDDHNSSAVVSSDLSSTSLTRLANSKKFNEQFLIEYLTARGLLGPKTVLSNEYLKISISTSGESVFLPTISSNDDEYLSRLNGLNDGTDDAEADFFMDGIDQQEGNTPSLATTAAATESGGSINENRDTLLRENNSGDHPGSGSELNTRSVEIDSSMVSYSIAVIVSVKKPTRFTDMQLELCSRVKVFWNTGVPPTKTFNEEFYNAASMKWNLNDENFDLFVPLSISPDDQMIENNSNDRQMRLFKNIPTEERLYLDKTKTKASLLNAIDVNKTHLYQPGDYVFLVPVVFSNHIPETIYLPSARVSYRLRLATKAINRKGFYRQDSNSPQPIVSPDSSSSLSSTTSSLKLTETESAQAHRRISNTLFSKVKNHLHMSSHQLKNEESGEEDIFAEYPIKVIRTPPPVAVSTANKPIYINRVWTDSLSYEISFAQKYVSLNSEVPIKIKLAPICKNVCVKRIHVSITERVTFVSKGYEYEYDQTDPVAKDPYNPYYLDFASKRRKERSVSLFEIRTKEKGTRALREEIVENSFNDNLLSYSPFDDDSDSKGNPKERLGITEPIIIETKLKFPKYEDLDKRTAKIIPPYGIDAYTSIPNPEHAVANGPSHRRPSVIGFLSGHKGSKSHEENEKPVYDPKFHQTIIKSNSGLPVKTHTRLNTPKRGLYLDSLHFSNVYCRHKLEIMLRISKPDPECPSKLRHYEVLIDTPIFLVSEQCNSGNMELPTYDMATMEGKGNQVPLSMNSDFFGNTCPPPPTFEEAISVPASPIVSPMGSPNIMASYDPDLLSIQQLNLSRTTSVSGPSGYSDDAGVPNVNRNSISNANAMNGSISNSAFVSGNSGQGVARARATSVNDRSRFNNLDKLLSTPSPVNRSHNSSPTNGLSQANGTVRIPNATTENSKDKQNEFFKKGYTLANVKDDEEQEGIVSSSSADSLLSHGNEPPRYDEIVPLMSDEE.

2 disordered regions span residues 1–48 and 63–155; these read MPFI…RRSS and VHSP…YSQI. Polar residues predominate over residues 11-34; that stretch reads KNSSHSLSETDLNQSKGQPFQPSP. Serine 18 carries the post-translational modification Phosphoserine. A compositionally biased stretch (low complexity) spans 70-81; the sequence is NNTTKGGNNNGN. Serine 115 bears the Phosphoserine mark. The span at 117–130 shows a compositional bias: low complexity; sequence SDSATTTPRSSTSD. Residue serine 140 is modified to Phosphoserine. Lysine 191 is covalently cross-linked (Glycyl lysine isopeptide (Lys-Gly) (interchain with G-Cter in ubiquitin)). Disordered regions lie at residues 275-312 and 486-523; these read ATTA…ELNT and YRQD…AQAH. At serine 286 the chain carries Phosphoserine. Over residues 501-519 the composition is skewed to low complexity; the sequence is SSSSLSSTTSSLKLTETES. Serine 527 and serine 550 each carry phosphoserine. Glycyl lysine isopeptide (Lys-Gly) (interchain with G-Cter in ubiquitin) cross-links involve residues lysine 577, lysine 651, and lysine 712. Serine 775 bears the Phosphoserine mark. Glycyl lysine isopeptide (Lys-Gly) (interchain with G-Cter in ubiquitin) cross-links involve residues lysine 794, lysine 807, and lysine 1024. 2 disordered regions span residues 1016 to 1065 and 1079 to 1117; these read RSRF…KDKQ and KDDE…SDEE. The segment covering 1027 to 1059 has biased composition (polar residues); the sequence is STPSPVNRSHNSSPTNGLSQANGTVRIPNATTE. A Phosphoserine modification is found at serine 1035. Residues 1089 to 1098 show a composition bias toward low complexity; that stretch reads SSSSADSLLS.

This sequence belongs to the CSR2 family.

It localises to the cytoplasm. May be involved in cell wall organization and biogenesis. The sequence is that of Protein ECM21 (ECM21) from Saccharomyces cerevisiae (strain ATCC 204508 / S288c) (Baker's yeast).